Reading from the N-terminus, the 274-residue chain is Orotidine 5'-phosphate decarboxylase (274 aa).

The Proton donor role is filled by Lys-95.

The protein belongs to the OMP decarboxylase family. Type 2 subfamily.

The catalysed reaction is orotidine 5'-phosphate + H(+) = UMP + CO2. The protein operates within pyrimidine metabolism; UMP biosynthesis via de novo pathway; UMP from orotate: step 2/2. In Verminephrobacter eiseniae (strain EF01-2), this protein is Orotidine 5'-phosphate decarboxylase.